Reading from the N-terminus, the 278-residue chain is OX-2 membrane glycoprotein (278 aa).

The signal sequence occupies residues 1-30; sequence MERLVIRMPFSHLSTYSLVWVMAAVVLCTA. The Ig-like V-type domain occupies 31–141; it reads QVQVVTQDER…SGTACLTVYV (111 aa). Over 31 to 232 the chain is Extracellular; that stretch reads QVQVVTQDER…TDFKQTVNKG (202 aa). Intrachain disulfides connect C51/C121 and C118/C136. N-linked (GlcNAc...) asparagine glycans are attached at residues N95, N103, and N110. In terms of domain architecture, Ig-like C2-type spans 142–232; sequence QPIVSLHYKF…TDFKQTVNKG (91 aa). N157, N181, and N190 each carry an N-linked (GlcNAc...) asparagine glycan. Residues C160 and C214 are joined by a disulfide bond. The chain crosses the membrane as a helical span at residues 233–259; that stretch reads YWFSVPLLLSIVSLVILLVLISILLYW. Residues 260 to 278 are Cytoplasmic-facing; that stretch reads KRHRNQDRGELSQGVQKMT.

CD200 and CD200R1 interact via their respective N-terminal Ig-like domains.

It is found in the cell membrane. Costimulates T-cell proliferation. May regulate myeloid cell activity in a variety of tissues. The sequence is that of OX-2 membrane glycoprotein (CD200) from Homo sapiens (Human).